A 241-amino-acid polypeptide reads, in one-letter code: 1-(5-phosphoribosyl)-5-[(5-phosphoribosylamino)methylideneamino] imidazole-4-carboxamide isomerase (241 aa).

D8 functions as the Proton acceptor in the catalytic mechanism. Residue D131 is the Proton donor of the active site.

It belongs to the HisA/HisF family.

It is found in the cytoplasm. It carries out the reaction 1-(5-phospho-beta-D-ribosyl)-5-[(5-phospho-beta-D-ribosylamino)methylideneamino]imidazole-4-carboxamide = 5-[(5-phospho-1-deoxy-D-ribulos-1-ylimino)methylamino]-1-(5-phospho-beta-D-ribosyl)imidazole-4-carboxamide. The protein operates within amino-acid biosynthesis; L-histidine biosynthesis; L-histidine from 5-phospho-alpha-D-ribose 1-diphosphate: step 4/9. This chain is 1-(5-phosphoribosyl)-5-[(5-phosphoribosylamino)methylideneamino] imidazole-4-carboxamide isomerase, found in Sorangium cellulosum (strain So ce56) (Polyangium cellulosum (strain So ce56)).